Reading from the N-terminus, the 230-residue chain is Flagellar L-ring protein (230 aa).

The signal sequence occupies residues 1–15; it reads MSRLPSLSRLCLAIA. Cysteine 16 carries N-palmitoyl cysteine lipidation. Cysteine 16 is lipidated: S-diacylglycerol cysteine.

This sequence belongs to the FlgH family. As to quaternary structure, the basal body constitutes a major portion of the flagellar organelle and consists of four rings (L,P,S, and M) mounted on a central rod.

Its subcellular location is the cell outer membrane. It is found in the bacterial flagellum basal body. Assembles around the rod to form the L-ring and probably protects the motor/basal body from shearing forces during rotation. The sequence is that of Flagellar L-ring protein from Xanthomonas euvesicatoria pv. vesicatoria (strain 85-10) (Xanthomonas campestris pv. vesicatoria).